We begin with the raw amino-acid sequence, 98 residues long: Peptides MS9.1 (98 aa).

Positions 1–21 are cleaved as a signal peptide; sequence MKQSLILAVLCLALVFATIEA. The propeptide occupies 22–27; sequence KPKADP. 2 disulfides stabilise this stretch: C34/C46 and C37/C52. 2 consecutive propeptides follow at residues 63–64 and 92–98; these read DP and DPVRDAE.

Belongs to the sea anemone BBH family.

Its subcellular location is the secreted. It is found in the nematocyst. Acts as a positive modulator of mammalian TRPA1, a non-selective cation channel involved in detection of pain, in vitro yet has an analgesic and anti-inflammatory effect in vivo. The sequence is that of Peptides MS9.1 from Metridium senile (Brown sea anemone).